A 308-amino-acid chain; its full sequence is Ribosomal RNA small subunit methyltransferase H (308 aa).

Residues 36–38, D55, F86, D103, and Q110 contribute to the S-adenosyl-L-methionine site; that span reads GGH.

Belongs to the methyltransferase superfamily. RsmH family.

The protein resides in the cytoplasm. The enzyme catalyses cytidine(1402) in 16S rRNA + S-adenosyl-L-methionine = N(4)-methylcytidine(1402) in 16S rRNA + S-adenosyl-L-homocysteine + H(+). Its function is as follows. Specifically methylates the N4 position of cytidine in position 1402 (C1402) of 16S rRNA. The protein is Ribosomal RNA small subunit methyltransferase H of Helicobacter pylori (strain Shi470).